Consider the following 312-residue polypeptide: Olfactory receptor 6C68 (312 aa).

The Extracellular portion of the chain corresponds to 1 to 23 (MRKHTAITTFILLGLTEDPQLQV). Residues 24-44 (LLFMFLFITYMLSVTGKLTII) form a helical membrane-spanning segment. Residues 45–55 (ALTMLDPHLKT) lie on the Cytoplasmic side of the membrane. Residues 56 to 76 (PMYFFLQNLSFLEISFTATCV) form a helical membrane-spanning segment. At 77–95 (PRFLYSISTGNKIITYNAC) the chain is on the extracellular side. Cys-95 and Cys-177 are oxidised to a cystine. A helical membrane pass occupies residues 96–116 (VIQLFFADLFGVTEFFLLATM). Topologically, residues 117 to 143 (SYDRYVAICKPLHYMAIMSNKVCKTMV) are cytoplasmic. The chain crosses the membrane as a helical span at residues 144 to 164 (ICCWMAALMIILPPLSLGFHL). The Extracellular portion of the chain corresponds to 165 to 197 (EFCDSNVINHFGCDALPILKIPCSDTSLIEQMV). A helical transmembrane segment spans residues 198-218 (VASAVLTFIITLVCVVLSYTY). The Cytoplasmic portion of the chain corresponds to 219-239 (IIRTILKFPSVQQKKKAFSTC). A helical transmembrane segment spans residues 240-260 (SSHITVVSITYGSCIFIYIKP). Over 261-271 (SAKEEVNINKG) the chain is Extracellular. Residues 272 to 292 (VSVLISSISPMLNSFIYTLRN) traverse the membrane as a helical segment. Residues 293–312 (EQVKQAFHDSLKKIAFRLKK) are Cytoplasmic-facing.

This sequence belongs to the G-protein coupled receptor 1 family.

The protein localises to the cell membrane. Odorant receptor. The sequence is that of Olfactory receptor 6C68 (OR6C68) from Homo sapiens (Human).